A 473-amino-acid chain; its full sequence is 3-isopropylmalate dehydratase large subunit 2 (473 aa).

[4Fe-4S] cluster is bound by residues cysteine 350, cysteine 410, and cysteine 413.

Belongs to the aconitase/IPM isomerase family. LeuC type 1 subfamily. In terms of assembly, heterodimer of LeuC and LeuD. Requires [4Fe-4S] cluster as cofactor.

The catalysed reaction is (2R,3S)-3-isopropylmalate = (2S)-2-isopropylmalate. The protein operates within amino-acid biosynthesis; L-leucine biosynthesis; L-leucine from 3-methyl-2-oxobutanoate: step 2/4. Its function is as follows. Catalyzes the isomerization between 2-isopropylmalate and 3-isopropylmalate, via the formation of 2-isopropylmaleate. The protein is 3-isopropylmalate dehydratase large subunit 2 of Salmonella choleraesuis (strain SC-B67).